The primary structure comprises 442 residues: D-galactonate dehydratase family member SSBG_02010 (442 aa).

D246 serves as a coordination point for Mg(2+). Residue H248 coordinates D-arabinonate. Positions 272 and 298 each coordinate Mg(2+). 4 residues coordinate D-arabinonate: E298, R319, H348, and E375.

Belongs to the mandelate racemase/muconate lactonizing enzyme family. GalD subfamily.

In terms of biological role, has no detectable activity with D-mannonate and with a panel of 70 other acid sugars (in vitro), in spite of the conservation of the residues that are expected to be important for catalytic activity and cofactor binding. May have evolved a divergent function. The polypeptide is D-galactonate dehydratase family member SSBG_02010 (Streptomyces sp. (strain SPB074)).